Reading from the N-terminus, the 241-residue chain is Fatty acid metabolism regulator protein (241 aa).

One can recognise an HTH gntR-type domain in the interval 6-74 (KGPASFAEKY…HGKPTRVNNF (69 aa)). Residues 34 to 53 (ERELSELIGVTRTTLREVLQ) constitute a DNA-binding region (H-T-H motif).

Homodimer.

The protein localises to the cytoplasm. Functionally, multifunctional regulator of fatty acid metabolism. This Shewanella sp. (strain ANA-3) protein is Fatty acid metabolism regulator protein.